Reading from the N-terminus, the 353-residue chain is Adenine deaminase (353 aa).

Residues His-19, His-21, and His-208 each coordinate Zn(2+). Glu-211 acts as the Proton donor in catalysis. Residue Asp-289 coordinates Zn(2+). Asp-290 contacts substrate.

It belongs to the metallo-dependent hydrolases superfamily. Adenosine and AMP deaminases family. Adenine deaminase type 2 subfamily. Zn(2+) is required as a cofactor.

It localises to the cytoplasm. The protein resides in the nucleus. It catalyses the reaction adenine + H2O + H(+) = hypoxanthine + NH4(+). In terms of biological role, catalyzes the hydrolytic deamination of adenine to hypoxanthine. Plays an important role in the purine salvage pathway and in nitrogen catabolism. In Gibberella zeae (strain ATCC MYA-4620 / CBS 123657 / FGSC 9075 / NRRL 31084 / PH-1) (Wheat head blight fungus), this protein is Adenine deaminase.